We begin with the raw amino-acid sequence, 566 residues long: Probable F-box protein At5g39490 (566 aa).

Positions 8-54 constitute an F-box domain; it reads ACLLLMLPEDIFVVISRFLSPSDICNLILCGKSLRALVDSEKTWLVQ. Positions 318-338 are disordered; that stretch reads LRKSSSSKNTTPSQSEIRHSN. Low complexity predominate over residues 320 to 332; it reads KSSSSKNTTPSQS.

The polypeptide is Probable F-box protein At5g39490 (Arabidopsis thaliana (Mouse-ear cress)).